The primary structure comprises 259 residues: Ribonuclease PH (259 aa).

Residues Arg-88 and 126 to 128 (GTR) each bind phosphate.

This sequence belongs to the RNase PH family. As to quaternary structure, homohexameric ring arranged as a trimer of dimers.

The enzyme catalyses tRNA(n+1) + phosphate = tRNA(n) + a ribonucleoside 5'-diphosphate. Phosphorolytic 3'-5' exoribonuclease that plays an important role in tRNA 3'-end maturation. Removes nucleotide residues following the 3'-CCA terminus of tRNAs; can also add nucleotides to the ends of RNA molecules by using nucleoside diphosphates as substrates, but this may not be physiologically important. Probably plays a role in initiation of 16S rRNA degradation (leading to ribosome degradation) during starvation. The chain is Ribonuclease PH from Mycobacterium leprae (strain Br4923).